The following is a 1460-amino-acid chain: MSSLKDEVPTETSEDFGFKFLGQKQILPSFNEKLPFASLQNLDISNSKSLFVAASGSKAVVGELQLLRDHITSDSTPLTFKWEKEIPDVIFVCFHGDQVLVSTRNALYSLDLEELSEFRTVTSFEKPVFQLKNVNNTLVILNSVNDLSALDLRTKSTKQLAQNVTSFDVTNSQLAVLLKDRSFQSFAWRNGEMEKQFEFSLPSELEELPVEEYSPLSVTILSPQDFLAVFGNVISETDDEVSYDQKMYIIKHIDGSASFQETFDITPPFGQIVRFPYMYKVTLSGLIEPDANVNVLASSCSSEVSIWDSKQVIEPSQDSERAVLPISEETDKDTNPIGVAVDVVTSGTILEPCSGVDTIERLPLVYILNNEGSLQIVGLFHVAAIKSGHYSINLESLEHEKSLSPTSEKIPIAGQEQEEKKKNNESSKALSENPFTSANTSGFTFLKTQPAAANSLQSQSSSTFGAPSFGSSAFKIDLPSVSSTSTGVASSEQDATDPASAKPVFGKPAFGAIAKEPSTSEYAFGKPSFGAPSFGSGKSSVESPASGSAFGKPSFGTPSFGSGNSSVEPPASGSAFGKPSFGTPSFGSGNSSAEPPASGSAFGKPSFGTSAFGTASSNETNSGSIFGKAAFGSSSFAPANNELFGSNFTISKPTVDSPKEVDSTSPFPSSGDQSEDESKSDVDSSSTPFGTKPNTSTKPKTNAFDFGSSSFGSGFSKALESVGSDTTFKFGTQASPFSSQLGNKSPFSSFTKDDTENGSLSKGSTSEINDDNEEHESNGPNVSGNDLTDSTVEQTSSTRLPETPSDEDGEVVEEEAQKSPIGKLTETIKKSANIDMAGLKNPVFGNHVKAKSESPFSAFATNITKPSSTTPAFSFGNSTMNKSNTSTVSPMEEADTKETSEKGPITLKSVENPFLPAKEERTGESSKKDHNDDPKDGYVSGSEISVRTSESAFDTTANEEIPKSQDVNNHEKSETDPKYSQHAVVDHDNKSKEMNETSKNNERSGQPNHGVQGDGIALKKDNEKENFDSNMAIKQFEDHQSSEEDASEKDSRQSSEVKESDDNMSLNSDRDESISESYDKLEDINTDELPHGGEAFKAREVSASADFDVQTSLEDNYAESGIQTDLSESSKENEVQTDAIPVKHNSTQTVKKEAVDNGLQTEPVETCNFSVQTFEGDENYLAEQCKPKQLKEYYTSAKVSNIPFVSQNSTLRLIESTFQTVEAEFTVLMENIRNMDTFFTDQSSIPLVKRTVRSINNLYTWRIPEAEILLNIQNNIKCEQMQITNANIQDLKEKVTDYVRKDIAQITEDVANAKEEYLFLMHFDDASSGYVKDLSTHQFRMQKTLRQKLFDVSAKINHTEELLNILKLFTVKNKRLDDNPLVAKLAKESLARDGLLKEIKLLREQVSRLQLEEKGKKASSFDASSSITKDMKGFKVVEVGLAMNTKKQIGDFFKNLNMAK.

The interaction with DBP5 stretch occupies residues 1 to 500 (MSSLKDEVPT…SEQDATDPAS (500 aa)). The FG 1 repeat unit spans residues 228-231 (AVFG). The stretch at 267 to 270 (PPFG) is one PXFG 1 repeat. Residues 401-435 (KSLSPTSEKIPIAGQEQEEKKKNNESSKALSENPF) form a disordered region. Serine 404 is modified (phosphoserine). Residues 462 to 470 (STFGAPSFG) form an SXFGXPXFG 1 repeat. The disordered stretch occupies residues 483-504 (STSTGVASSEQDATDPASAKPV). Positions 497 to 701 (DPASAKPVFG…KPNTSTKPKT (205 aa)) are interactions with CRM1 and GLE1. The stretch at 503-511 (PVFGKPAFG) is one SXFGXPXFG 2; approximate repeat. The stretch at 522–530 (YAFGKPSFG) is one SXFGXPXFG 3; approximate repeat. The stretch at 532–535 (PSFG) is one PXFG 2 repeat. The tract at residues 533-619 (SFGSGKSSVE…SAFGTASSNE (87 aa)) is disordered. Composition is skewed to polar residues over residues 536–546 (SGKSSVESPAS), 556–567 (GTPSFGSGNSSV), 582–593 (GTPSFGSGNSSA), and 607–619 (FGTS…SSNE). The stretch at 548 to 556 (SAFGKPSFG) is one SXFGXPXFG 4 repeat. Residues 558–561 (PSFG) form a PXFG 3 repeat. The SXFGXPXFG 5 repeat unit spans residues 574 to 582 (SAFGKPSFG). The PXFG 4 repeat unit spans residues 584–587 (PSFG). The stretch at 600–608 (SAFGKPSFG) is one SXFGXPXFG 6 repeat. The stretch at 610–613 (SAFG) is one SXFG 1 repeat. The stretch at 624 to 632 (SIFGKAAFG) is one SXFGXPXFG 7; approximate repeat. The stretch at 642-645 (ELFG) is one FG 2 repeat. The segment at 647 to 704 (NFTISKPTVDSPKEVDSTSPFPSSGDQSEDESKSDVDSSSTPFGTKPNTSTKPKTNAF) is disordered. The residue at position 657 (serine 657) is a Phosphoserine. A compositionally biased stretch (low complexity) spans 683 to 704 (DSSSTPFGTKPNTSTKPKTNAF). One copy of the FG 3 repeat lies at 687–690 (TPFG). The FXFG 1 repeat unit spans residues 704-707 (FDFG). An SXFG 2 repeat occupies 709 to 712 (SSFG). At serine 724 the chain carries Phosphoserine. Composition is skewed to polar residues over residues 727 to 750 (TFKF…FSSF), 757 to 767 (NGSLSKGSTSE), and 778 to 800 (NGPN…STRL). A disordered region spans residues 727–824 (TFKFGTQASP…EAQKSPIGKL (98 aa)). An FXFG 2 repeat occupies 728-731 (FKFG). Phosphoserine is present on residues serine 735 and serine 745. Threonine 803 carries the post-translational modification Phosphothreonine. Residues 804-814 (PSDEDGEVVEE) show a composition bias toward acidic residues. Phosphoserine occurs at positions 805 and 819. The stretch at 842–845 (PVFG) is one PXFG 5 repeat. The span at 861-889 (TNITKPSSTTPAFSFGNSTMNKSNTSTVS) shows a compositional bias: polar residues. Residues 861–1092 (TNITKPSSTT…DINTDELPHG (232 aa)) form a disordered region. The FXFG 3 repeat unit spans residues 873–876 (FSFG). Position 889 is a phosphoserine (serine 889). Residues 917 to 936 (AKEERTGESSKKDHNDDPKD) are compositionally biased toward basic and acidic residues. Serine 940 carries the phosphoserine modification. Positions 942-958 (SEISVRTSESAFDTTAN) are enriched in polar residues. Composition is skewed to basic and acidic residues over residues 960–1002 (EIPK…KNNE), 1017–1027 (ALKKDNEKENF), 1035–1061 (QFED…KESD), and 1068–1092 (SDRD…LPHG). Residues 1086–1175 (TDELPHGGEA…TCNFSVQTFE (90 aa)) are interaction with DYN2. The tract at residues 1223-1460 (AEFTVLMENI…DFFKNLNMAK (238 aa)) is interaction with NUP82. Coiled-coil stretches lie at residues 1279 to 1320 (EQMQ…YLFL) and 1383 to 1418 (AKLA…GKKA).

Component of the nuclear pore complex (NPC). NPC constitutes the exclusive means of nucleocytoplasmic transport. NPCs allow the passive diffusion of ions and small molecules and the active, nuclear transport receptor-mediated bidirectional transport of macromolecules such as proteins, RNAs, ribonucleoparticles (RNPs), and ribosomal subunits across the nuclear envelope. Due to its 8-fold rotational symmetry, all subunits are present with 8 copies or multiples thereof. Part of the NUP82 subcomplex, interacts with NUP82 through its C-terminal coiled coil. This subcomplex is the base for interactions with NUP116 and GLE2, with NUP42 and GLE1 and with DYN2. Interacts directly with DYN2. Interacts through its FG repeats with karyopherins, such as heterodimeric mRNA transport factor MEX67/MTR2, CRM1 (XPO1), and PSE1 (GSP1-GDP dependent). Interaction with CRM1 (XPO1) is GSP1-GTP dependent and stimulated by RNA1. NUP159 also interacts with GLE1 and the ATP-dependent RNA helicase DBP5.

The protein localises to the nucleus. It is found in the nuclear pore complex. Its subcellular location is the nucleus membrane. In terms of biological role, functions as a component of the nuclear pore complex (NPC). NPC components, collectively referred to as nucleoporins (NUPs), can play the role of both NPC structural components and of docking or interaction partners for transiently associated nuclear transport factors. Active directional transport is assured by both, a Phe-Gly (FG) repeat affinity gradient for these transport factors across the NPC and a transport cofactor concentration gradient across the nuclear envelope (GSP1 and GSP2 GTPases associated predominantly with GTP in the nucleus, with GDP in the cytoplasm). NUP159 plays an important role in several nuclear export pathways including poly(A)+ RNA, pre-ribosome, and protein export. This chain is Nucleoporin NUP159 (NUP159), found in Saccharomyces cerevisiae (strain ATCC 204508 / S288c) (Baker's yeast).